The primary structure comprises 321 residues: Quinol oxidase subunit 2 (321 aa).

The first 25 residues, 1–25 (MIFLFRALKPLLVLALLTVVFVLGG), serve as a signal peptide directing secretion. Cys26 carries N-palmitoyl cysteine lipidation. Cys26 carries the S-diacylglycerol cysteine lipid modification. The next 2 membrane-spanning stretches (helical) occupy residues 49–69 (SIGF…IILV) and 90–110 (TFLE…LSVP). The segment at 294-321 (QAVSPHSKTDPFENVKENEFKKSDDTEE) is disordered. Basic and acidic residues predominate over residues 300-321 (SKTDPFENVKENEFKKSDDTEE).

The protein belongs to the cytochrome c oxidase subunit 2 family.

The protein localises to the cell membrane. It catalyses the reaction 2 a quinol + O2 = 2 a quinone + 2 H2O. Functionally, catalyzes quinol oxidation with the concomitant reduction of oxygen to water. Major component for energy conversion during vegetative growth. Subunit II transfers the electrons from a quinol to the binuclear center of the catalytic subunit I. This chain is Quinol oxidase subunit 2 (qoxA), found in Bacillus spizizenii (strain ATCC 23059 / NRRL B-14472 / W23) (Bacillus subtilis subsp. spizizenii).